Here is a 321-residue protein sequence, read N- to C-terminus: Ribosomal RNA small subunit methyltransferase H (321 aa).

S-adenosyl-L-methionine contacts are provided by residues 40 to 42 (GGH), aspartate 60, phenylalanine 84, aspartate 106, and glutamine 113.

This sequence belongs to the methyltransferase superfamily. RsmH family.

It localises to the cytoplasm. The catalysed reaction is cytidine(1402) in 16S rRNA + S-adenosyl-L-methionine = N(4)-methylcytidine(1402) in 16S rRNA + S-adenosyl-L-homocysteine + H(+). Functionally, specifically methylates the N4 position of cytidine in position 1402 (C1402) of 16S rRNA. The protein is Ribosomal RNA small subunit methyltransferase H of Histophilus somni (strain 2336) (Haemophilus somnus).